Consider the following 123-residue polypeptide: cAMP-responsive element-binding protein-like 2 (123 aa).

A disordered region spans residues 1 to 24; it reads MDDSKVVGGKVKKPGKRGRKPAKI. Over residues 10 to 21 the composition is skewed to basic residues; it reads KVKKPGKRGRKP. The 64-residue stretch at 23–86 folds into the bZIP domain; sequence KIDLKAKLER…MAMDQGKIPS (64 aa). Residues 29 to 60 are basic motif; sequence KLERSRQSARECRARKKLRYQYLEELVSSRER. The interval 62 to 69 is leucine-zipper; it reads ICALREEL. Positions 92–123 are disordered; the sequence is LTGEEQSKPQQNSSRHPKAGKTDANTNSLVGN. A compositionally biased stretch (polar residues) spans 114–123; the sequence is DANTNSLVGN.

Belongs to the bZIP family. ATF subfamily. Interacts with CREB1; regulates CREB1 phosphorylation, stability and transcriptional activity. Post-translationally, phosphorylated by AMPK. Widely expressed with higher expression in adipose tissue, skeletal muscle, and liver (at protein level).

It is found in the nucleus. Its function is as follows. Probable regulator of CREB1 transcriptional activity which is involved in adipose cells differentiation. May also play a regulatory role in the cell cycle. The polypeptide is cAMP-responsive element-binding protein-like 2 (Crebl2) (Mus musculus (Mouse)).